The primary structure comprises 692 residues: Glycine--tRNA ligase beta subunit (692 aa).

Belongs to the class-II aminoacyl-tRNA synthetase family. As to quaternary structure, tetramer of two alpha and two beta subunits.

It localises to the cytoplasm. The catalysed reaction is tRNA(Gly) + glycine + ATP = glycyl-tRNA(Gly) + AMP + diphosphate. The polypeptide is Glycine--tRNA ligase beta subunit (Oceanobacillus iheyensis (strain DSM 14371 / CIP 107618 / JCM 11309 / KCTC 3954 / HTE831)).